Here is a 227-residue protein sequence, read N- to C-terminus: Enolase-phosphatase E1 (227 aa).

The Mg(2+) site is built by Asp11 and Glu13. Substrate contacts are provided by residues 118 to 119 and Lys161; that span reads SS. Asp186 is a Mg(2+) binding site.

It belongs to the HAD-like hydrolase superfamily. MasA/MtnC family. In terms of assembly, monomer. It depends on Mg(2+) as a cofactor.

The protein resides in the cytoplasm. The protein localises to the nucleus. The enzyme catalyses 5-methylsulfanyl-2,3-dioxopentyl phosphate + H2O = 1,2-dihydroxy-5-(methylsulfanyl)pent-1-en-3-one + phosphate. It functions in the pathway amino-acid biosynthesis; L-methionine biosynthesis via salvage pathway; L-methionine from S-methyl-5-thio-alpha-D-ribose 1-phosphate: step 3/6. The protein operates within amino-acid biosynthesis; L-methionine biosynthesis via salvage pathway; L-methionine from S-methyl-5-thio-alpha-D-ribose 1-phosphate: step 4/6. Bifunctional enzyme that catalyzes the enolization of 2,3-diketo-5-methylthiopentyl-1-phosphate (DK-MTP-1-P) into the intermediate 2-hydroxy-3-keto-5-methylthiopentenyl-1-phosphate (HK-MTPenyl-1-P), which is then dephosphorylated to form the acireductone 1,2-dihydroxy-3-keto-5-methylthiopentene (DHK-MTPene). This chain is Enolase-phosphatase E1, found in Saccharomyces cerevisiae (strain RM11-1a) (Baker's yeast).